The sequence spans 352 residues: Phosphate acyltransferase (352 aa).

Residues 328–339 (ESFPGDAREREG) show a composition bias toward basic and acidic residues. The tract at residues 328 to 352 (ESFPGDAREREGAPAPDAGTERVAS) is disordered.

The protein belongs to the PlsX family. Homodimer. Probably interacts with PlsY.

The protein localises to the cytoplasm. It carries out the reaction a fatty acyl-[ACP] + phosphate = an acyl phosphate + holo-[ACP]. It functions in the pathway lipid metabolism; phospholipid metabolism. Functionally, catalyzes the reversible formation of acyl-phosphate (acyl-PO(4)) from acyl-[acyl-carrier-protein] (acyl-ACP). This enzyme utilizes acyl-ACP as fatty acyl donor, but not acyl-CoA. In Citrifermentans bemidjiense (strain ATCC BAA-1014 / DSM 16622 / JCM 12645 / Bem) (Geobacter bemidjiensis), this protein is Phosphate acyltransferase.